The chain runs to 972 residues: UPF0746 protein DDB_G0280785 (972 aa).

A compositionally biased stretch (basic and acidic residues) spans 1 to 19 (MISNKRKEIENINRHHEKD). A disordered region spans residues 1–30 (MISNKRKEIENINRHHEKDNDDDDSDGIDN). The region spanning 44-78 (SGSTNYRELQIIAKSLGLASNGKKQLVYNRIEGYF) is the SAP domain.

The protein belongs to the UPF0746 family.

The chain is UPF0746 protein DDB_G0280785 from Dictyostelium discoideum (Social amoeba).